The primary structure comprises 389 residues: Ethanolamine-phosphate cytidylyltransferase (389 aa).

Residues 221 to 222 (AF), 229 to 232 (HVDF), lysine 259, 307 to 310 (HGKT), and 336 to 340 (SGNDL) contribute to the CTP site. Phosphothreonine occurs at positions 341 and 342.

Belongs to the cytidylyltransferase family.

The catalysed reaction is phosphoethanolamine + CTP + H(+) = CDP-ethanolamine + diphosphate. The protein operates within phospholipid metabolism; phosphatidylethanolamine biosynthesis; phosphatidylethanolamine from ethanolamine: step 2/3. Its function is as follows. Ethanolamine-phosphate cytidylyltransferase that catalyzes the second step in the synthesis of phosphatidylethanolamine (PE) from ethanolamine via the CDP-ethanolamine pathway. Phosphatidylethanolamine is a dominant inner-leaflet phospholipid in cell membranes, where it plays a role in membrane function by structurally stabilizing membrane-anchored proteins, and participates in important cellular processes such as cell division, cell fusion, blood coagulation, and apoptosis. The sequence is that of Ethanolamine-phosphate cytidylyltransferase (PCYT2) from Bos taurus (Bovine).